A 155-amino-acid chain; its full sequence is Large-conductance mechanosensitive channel (155 aa).

3 helical membrane passes run Val-16–Leu-36, Val-40–Ile-60, and Gly-88–Val-108.

The protein belongs to the MscL family. As to quaternary structure, homopentamer.

The protein resides in the cell inner membrane. Functionally, channel that opens in response to stretch forces in the membrane lipid bilayer. May participate in the regulation of osmotic pressure changes within the cell. The protein is Large-conductance mechanosensitive channel of Chlorobium chlorochromatii (strain CaD3).